The primary structure comprises 901 residues: Disease resistance RPP8-like protein 3 (901 aa).

The stretch at 15 to 56 (ALLNRESERLNGIDEQVDGLKRQLRGLQSLLKDADAKKHGSD) forms a coiled coil. Positions 144-453 (LQDIQREIRQ…AEGIYDGLTI (310 aa)) constitute an NB-ARC domain. Residues 190-197 (GMGGIGKT) and 385-392 (GAQIVGKS) contribute to the ATP site. LRR repeat units lie at residues 567 to 591 (LPLL…SIGG), 592 to 615 (LIHL…IRNL), and 833 to 858 (MPCL…KYVT).

This sequence belongs to the disease resistance NB-LRR family. RPP8/HRT subfamily.

Functionally, disease resistance protein. This is Disease resistance RPP8-like protein 3 (RPP8L3) from Arabidopsis thaliana (Mouse-ear cress).